A 133-amino-acid polypeptide reads, in one-letter code: ATP synthase epsilon chain (133 aa).

Belongs to the ATPase epsilon chain family. In terms of assembly, F-type ATPases have 2 components, CF(1) - the catalytic core - and CF(0) - the membrane proton channel. CF(1) has five subunits: alpha(3), beta(3), gamma(1), delta(1), epsilon(1). CF(0) has three main subunits: a, b and c.

The protein localises to the cell inner membrane. In terms of biological role, produces ATP from ADP in the presence of a proton gradient across the membrane. The sequence is that of ATP synthase epsilon chain from Maricaulis maris (strain MCS10) (Caulobacter maris).